A 405-amino-acid chain; its full sequence is Putative aminotransferase AatC (405 aa).

At lysine 238 the chain carries N6-(pyridoxal phosphate)lysine.

The protein belongs to the class-I pyridoxal-phosphate-dependent aminotransferase family. In terms of assembly, homodimer. The cofactor is pyridoxal 5'-phosphate.

The protein resides in the cytoplasm. This Rhizobium meliloti (strain 1021) (Ensifer meliloti) protein is Putative aminotransferase AatC (aatC).